We begin with the raw amino-acid sequence, 366 residues long: N-methyltransferase fsqC (366 aa).

The signal sequence occupies residues 1 to 18; it reads MSSNVQDIRGWPPPFANA. A glycan (N-linked (GlcNAc...) asparagine) is linked at asparagine 270.

This sequence belongs to the methyltransferase superfamily.

It functions in the pathway secondary metabolite biosynthesis. N-methyltransferase; part of the gene cluster that mediates the biosynthesis of the isoquinoline alkaloids fumisoquin A, fumisoquin B and fumisoquin C; as well as small amounts of fumipyrrole as a shunt metabolite. The products of the cluster lead to a brown coloration and are important for growth and conidiation. The nonribosomal peptide synthetase-like protein fsqF, which lacks a canonical condensation domain, is required for addition of a serine-derived dehydroalanine moiety to activated tyrosine but is not essential for the subsequent steps leading to isoquinoline formation. A different enzyme, most likely the ATP-grasp enzyme fsqD, is responsible for activation of tyrosine. Three additional enzymes encoded by the fsq cluster, the N-methyltransferase fsqC, the phenol 2-monooxygenase fsqG and the FAD-dependent oxidase fsqB, catalyze the formation of the isoquinoline ring system in the fumisoquins. FsqB converts the fspF thiolation domain-bound (2S,4S,5S)-2-amino-6-(3,4-dihydroxyphenyl)-4-hydroxy-5-(methylamino)hexanoyl into isoquinoline. The cyclization most likely proceeds via a two-step mechanism, beginning with FAD-dependent oxidation of the methyl group to an iminium species followed by electrophilic attack on the deprotonated phenol. The polypeptide is N-methyltransferase fsqC (Aspergillus fumigatus (strain ATCC MYA-4609 / CBS 101355 / FGSC A1100 / Af293) (Neosartorya fumigata)).